Reading from the N-terminus, the 184-residue chain is Putative axial regulator YABBY 2 (184 aa).

The C4-type zinc finger occupies 15–42 (CSFCTTILAVSVPYASLFTLVTVRCGHC). 2 stretches are compositionally biased toward polar residues: residues 76–94 (LVTR…NLSE) and 171–184 (LDQS…NGYY). Disordered stretches follow at residues 76 to 115 (LVTR…RQRV) and 162 to 184 (LDGN…NGYY).

This sequence belongs to the YABBY family. As to quaternary structure, interacts with SPL/NZZ and SPEAR2. As to expression, expressed at low levels in abaxial regions of lateral aerial organ primordia leading to cotyledons, leaves, flower meristems, sepals, petals, stamen and carpels, but not in roots.

The protein localises to the nucleus. Functionally, involved in the abaxial cell fate determination during embryogenesis and organogenesis. The polypeptide is Putative axial regulator YABBY 2 (YAB2) (Arabidopsis thaliana (Mouse-ear cress)).